An 880-amino-acid chain; its full sequence is MTTSGNSINKPDHSAHTPMMQQYLRIKTQHTDKLLFYRMGDFYELFYEDAEKAARLLDITLTHRGSSAGEPIKMAGVPFHAADQYLAKLVKLGESIAICEQIGDPATSKGPVERQVVRIITPGTLTDAGLLEERGNSIVLTLALHHGVIGLAWLNLAAGDMRVLETSPDNLASELERLHPSEILLPESLALPVILNSFTAPKRLPDWQFDYEHAMQQLTRQFGTRDLNAFGCEELRAAIMAAGALFEYVRLTQHTATDESATQVLGHLQTLRVERPETYLRMDAATRRNLEITLTLRGEEAPTLSSLLDICATSMGSRLLRHWLHHPLRNRITLQQRLDAVSDLIGAKPGILYAGIRERLKHIADIERITSRIALRTARPRDLSGLRDSLTALPEIIKLITTSTAIAIHRFVPAMEPDTTLTQLLVHALQPVPGAVIREGGVIADGYDAELDELRALQKNCGEFLLQLEARERERTGIPTLKVEYNRVHGFYIEVTRIHGEKIPADYRRRQTLKNAERYSIPELQVFENKTLTAREQALAQEKKLYEQLLEQLADFIIPLQEIARSVAELDVLCAFAERADLFGYTKPVFTDDPALDIEAGRHPVVENQIEQYIANDIQLGAVTREGRQMLIITGPNMGGKSTYMRQTALIILLAHCGSFVPAGSARIGPIDQIFTRIGAADDLAGGRSTFMVEMTEAASILRNATAQSLVLVDEIGRGTSTFDGLALAFAIARHLLTQNQSYTLFATHYFELTRLAEEFPQAINVHVTAVEHKRRIVFLHRIEEGSASRSYGLHVAALAGVPDKVIRNAGKILAQLEQEALSKSPQQTLFETIEENAEAAPASAHPVLDYLEQLHPDELTPREALEQLYLIKSMANRIK.

635–642 (GPNMGGKS) is a binding site for ATP.

This sequence belongs to the DNA mismatch repair MutS family.

Functionally, this protein is involved in the repair of mismatches in DNA. It is possible that it carries out the mismatch recognition step. This protein has a weak ATPase activity. This Nitrosomonas eutropha (strain DSM 101675 / C91 / Nm57) protein is DNA mismatch repair protein MutS.